The following is a 129-amino-acid chain: Small ribosomal subunit protein uS11 (129 aa).

Belongs to the universal ribosomal protein uS11 family. As to quaternary structure, part of the 30S ribosomal subunit. Interacts with proteins S7 and S18. Binds to IF-3.

In terms of biological role, located on the platform of the 30S subunit, it bridges several disparate RNA helices of the 16S rRNA. Forms part of the Shine-Dalgarno cleft in the 70S ribosome. The chain is Small ribosomal subunit protein uS11 from Roseobacter denitrificans (strain ATCC 33942 / OCh 114) (Erythrobacter sp. (strain OCh 114)).